Consider the following 122-residue polypeptide: uncharacterized protein (122 aa).

It is found in the mitochondrion. This is an uncharacterized protein from Arabidopsis thaliana (Mouse-ear cress).